We begin with the raw amino-acid sequence, 106 residues long: Thiosulfate sulfurtransferase GlpE (106 aa).

The Rhodanese domain maps to 17 to 105; it reads QLPSVCLADI…WRHVYPYTAT (89 aa). Residue cysteine 65 is the Cysteine persulfide intermediate of the active site.

It belongs to the GlpE family.

Its subcellular location is the cytoplasm. It carries out the reaction thiosulfate + hydrogen cyanide = thiocyanate + sulfite + 2 H(+). The enzyme catalyses thiosulfate + [thioredoxin]-dithiol = [thioredoxin]-disulfide + hydrogen sulfide + sulfite + 2 H(+). Transferase that catalyzes the transfer of sulfur from thiosulfate to thiophilic acceptors such as cyanide or dithiols. May function in a CysM-independent thiosulfate assimilation pathway by catalyzing the conversion of thiosulfate to sulfite, which can then be used for L-cysteine biosynthesis. The protein is Thiosulfate sulfurtransferase GlpE of Tolumonas auensis (strain DSM 9187 / NBRC 110442 / TA 4).